We begin with the raw amino-acid sequence, 235 residues long: DnaA regulatory inactivator Hda (235 aa).

This sequence belongs to the DnaA family. HdA subfamily. In terms of assembly, the active form seems to be an ADP-bound monomer. Forms the RIDA complex (regulatory inactivation of DnaA) of ATP-DnaA, ADP-Hda and the DNA-loaded beta sliding clamp (dnaN).

In terms of biological role, mediates the interaction of DNA replication initiator protein DnaA with DNA polymerase subunit beta sliding clamp (dnaN). Stimulates hydrolysis of ATP-DnaA to ADP-DnaA, rendering DnaA inactive for reinitiation, a process called regulatory inhibition of DnaA or RIDA. This is DnaA regulatory inactivator Hda from Yersinia pestis bv. Antiqua (strain Antiqua).